Consider the following 206-residue polypeptide: ATP synthase subunit b (206 aa).

A helical transmembrane segment spans residues L10–L30.

It belongs to the ATPase B chain family. As to quaternary structure, F-type ATPases have 2 components, F(1) - the catalytic core - and F(0) - the membrane proton channel. F(1) has five subunits: alpha(3), beta(3), gamma(1), delta(1), epsilon(1). F(0) has three main subunits: a(1), b(2) and c(10-14). The alpha and beta chains form an alternating ring which encloses part of the gamma chain. F(1) is attached to F(0) by a central stalk formed by the gamma and epsilon chains, while a peripheral stalk is formed by the delta and b chains.

It localises to the cell inner membrane. F(1)F(0) ATP synthase produces ATP from ADP in the presence of a proton or sodium gradient. F-type ATPases consist of two structural domains, F(1) containing the extramembraneous catalytic core and F(0) containing the membrane proton channel, linked together by a central stalk and a peripheral stalk. During catalysis, ATP synthesis in the catalytic domain of F(1) is coupled via a rotary mechanism of the central stalk subunits to proton translocation. Functionally, component of the F(0) channel, it forms part of the peripheral stalk, linking F(1) to F(0). The chain is ATP synthase subunit b from Geobacter sulfurreducens (strain ATCC 51573 / DSM 12127 / PCA).